We begin with the raw amino-acid sequence, 209 residues long: Large ribosomal subunit protein uL3 (209 aa).

The disordered stretch occupies residues 127-166 (NFGGGSRTHGQSDRLRAPGSVGGSSDPSRTFKGTRMAGRM).

The protein belongs to the universal ribosomal protein uL3 family. As to quaternary structure, part of the 50S ribosomal subunit. Forms a cluster with proteins L14 and L19.

In terms of biological role, one of the primary rRNA binding proteins, it binds directly near the 3'-end of the 23S rRNA, where it nucleates assembly of the 50S subunit. The polypeptide is Large ribosomal subunit protein uL3 (Chlorobaculum tepidum (strain ATCC 49652 / DSM 12025 / NBRC 103806 / TLS) (Chlorobium tepidum)).